The primary structure comprises 120 residues: uncharacterized protein (120 aa).

Residues 45–78 (QLISESLKIAQKDLMEVRKELRKRKIAIRETERD) adopt a coiled-coil conformation.

This is an uncharacterized protein from Bacillus subtilis (strain 168).